Here is a 284-residue protein sequence, read N- to C-terminus: Prolyl 4-hydroxylase subunit alpha (284 aa).

The Fe2OG dioxygenase domain occupies 169 to 284 (NFNSIKTQTQ…PRIAITTWIY (116 aa)). The Fe cation site is built by histidine 191, aspartate 193, and histidine 266. Residue arginine 276 coordinates 2-oxoglutarate.

It belongs to the P4HA family. As to quaternary structure, heterotetramer of two alpha-1 chains and two beta chains (the beta chain is the multi-functional PDI). The cofactor is Fe(2+). L-ascorbate is required as a cofactor.

Its subcellular location is the cytoplasm. The enzyme catalyses L-prolyl-[Skp1 protein] + 2-oxoglutarate + O2 = trans-4-hydroxy-L-prolyl-[Skp1 protein] + succinate + CO2. Inhibited by the prolyl-hydroxylase inhibitors alpha,alpha'-dipyridyl and ethyl 3,4-dihydroxybenzoate. Catalyzes the post-translational formation of 4-hydroxyproline. Probably hydroxylates skp1 on Pro-143. The sequence is that of Prolyl 4-hydroxylase subunit alpha (phyA) from Dictyostelium discoideum (Social amoeba).